A 140-amino-acid chain; its full sequence is Large ribosomal subunit protein uL11 (140 aa).

This sequence belongs to the universal ribosomal protein uL11 family. Part of the ribosomal stalk of the 50S ribosomal subunit. Interacts with L10 and the large rRNA to form the base of the stalk. L10 forms an elongated spine to which L12 dimers bind in a sequential fashion forming a multimeric L10(L12)X complex. One or more lysine residues are methylated.

In terms of biological role, forms part of the ribosomal stalk which helps the ribosome interact with GTP-bound translation factors. The polypeptide is Large ribosomal subunit protein uL11 (Staphylococcus saprophyticus subsp. saprophyticus (strain ATCC 15305 / DSM 20229 / NCIMB 8711 / NCTC 7292 / S-41)).